Consider the following 254-residue polypeptide: Vesicle transport protein USE1 (254 aa).

Topologically, residues 1–228 (MAYISENELK…AYKCGYDCFK (228 aa)) are cytoplasmic. Residues 229–249 (VMLIVLIFMSFVSMVLMMKIF) traverse the membrane as a helical; Anchor for type IV membrane protein segment. Over 250 to 254 (KKAST) the chain is Lumenal.

This sequence belongs to the USE1 family.

The protein resides in the endoplasmic reticulum membrane. In terms of biological role, SNARE that may be involved in targeting and fusion of Golgi-derived retrograde transport vesicles with the ER. The chain is Vesicle transport protein USE1 from Caenorhabditis elegans.